A 510-amino-acid chain; its full sequence is Histidine ammonia-lyase (510 aa).

A cross-link (5-imidazolinone (Ala-Gly)) is located at residues 143 to 145 (ASG). Ser144 is subject to 2,3-didehydroalanine (Ser).

It belongs to the PAL/histidase family. Contains an active site 4-methylidene-imidazol-5-one (MIO), which is formed autocatalytically by cyclization and dehydration of residues Ala-Ser-Gly.

Its subcellular location is the cytoplasm. It carries out the reaction L-histidine = trans-urocanate + NH4(+). The protein operates within amino-acid degradation; L-histidine degradation into L-glutamate; N-formimidoyl-L-glutamate from L-histidine: step 1/3. The sequence is that of Histidine ammonia-lyase from Yersinia pestis.